Reading from the N-terminus, the 259-residue chain is Phosphate import ATP-binding protein PstB 2 (259 aa).

The region spanning 12 to 254 (ISARGLNVHY…PKEPLTQGYI (243 aa)) is the ABC transporter domain. 44–51 (GPSGCGKS) serves as a coordination point for ATP.

Belongs to the ABC transporter superfamily. Phosphate importer (TC 3.A.1.7) family. As to quaternary structure, the complex is composed of two ATP-binding proteins (PstB), two transmembrane proteins (PstC and PstA) and a solute-binding protein (PstS).

The protein resides in the cell inner membrane. It catalyses the reaction phosphate(out) + ATP + H2O = ADP + 2 phosphate(in) + H(+). Functionally, part of the ABC transporter complex PstSACB involved in phosphate import. Responsible for energy coupling to the transport system. This Paramagnetospirillum magneticum (strain ATCC 700264 / AMB-1) (Magnetospirillum magneticum) protein is Phosphate import ATP-binding protein PstB 2.